Reading from the N-terminus, the 252-residue chain is Triosephosphate isomerase (252 aa).

A substrate-binding site is contributed by 10–12 (NWK). The Electrophile role is filled by His-96. Glu-168 (proton acceptor) is an active-site residue. Residues Gly-174, Ser-214, and 235-236 (GG) contribute to the substrate site.

Belongs to the triosephosphate isomerase family. In terms of assembly, homodimer.

It is found in the cytoplasm. The catalysed reaction is D-glyceraldehyde 3-phosphate = dihydroxyacetone phosphate. It functions in the pathway carbohydrate biosynthesis; gluconeogenesis. Its pathway is carbohydrate degradation; glycolysis; D-glyceraldehyde 3-phosphate from glycerone phosphate: step 1/1. Its function is as follows. Involved in the gluconeogenesis. Catalyzes stereospecifically the conversion of dihydroxyacetone phosphate (DHAP) to D-glyceraldehyde-3-phosphate (G3P). This chain is Triosephosphate isomerase, found in Lactobacillus acidophilus (strain ATCC 700396 / NCK56 / N2 / NCFM).